The following is a 253-amino-acid chain: tRNA (guanine-N(7)-)-methyltransferase (253 aa).

The segment covering 1–12 (MSQTPMPQPDQA) has biased composition (pro residues). Residues 1–39 (MSQTPMPQPDQAPPVDVGQPVDEAEAKRRRFKTHGRKKG) are disordered. A compositionally biased stretch (basic residues) spans 27-39 (KRRRFKTHGRKKG). Glu-84, Asp-109, Asn-136, and Asp-159 together coordinate S-adenosyl-L-methionine. Asp-159 is a catalytic residue. Residues Lys-163, Asp-195, and 232-235 (TNFE) contribute to the substrate site.

Belongs to the class I-like SAM-binding methyltransferase superfamily. TrmB family.

The catalysed reaction is guanosine(46) in tRNA + S-adenosyl-L-methionine = N(7)-methylguanosine(46) in tRNA + S-adenosyl-L-homocysteine. It participates in tRNA modification; N(7)-methylguanine-tRNA biosynthesis. Functionally, catalyzes the formation of N(7)-methylguanine at position 46 (m7G46) in tRNA. The polypeptide is tRNA (guanine-N(7)-)-methyltransferase (Magnetococcus marinus (strain ATCC BAA-1437 / JCM 17883 / MC-1)).